A 702-amino-acid polypeptide reads, in one-letter code: Serotransferrin-A (702 aa).

A signal peptide spans Met-1–Ala-19. Transferrin-like domains lie at Val-26–Glu-340 and Val-353–Lys-685. Disulfide bonds link Cys-29–Cys-64 and Cys-39–Cys-55. Fe(3+)-binding residues include Asp-79 and Tyr-111. Disulfide bonds link Cys-134/Cys-217, Cys-179/Cys-192, and Cys-245/Cys-259. 4 residues coordinate hydrogencarbonate: Thr-136, Lys-140, Ala-142, and Gly-143. Tyr-211 is a binding site for Fe(3+). His-267 provides a ligand contact to Fe(3+). Residues Glu-340–Ala-349 are connecting region. Disulfide bonds link Cys-356–Cys-388 and Cys-366–Cys-379. The Fe(3+) site is built by Asp-403 and Tyr-442. Cystine bridges form between Cys-413–Cys-697, Cys-431–Cys-658, Cys-465–Cys-544, Cys-489–Cys-686, Cys-499–Cys-513, Cys-510–Cys-527, and Cys-584–Cys-598. Hydrogencarbonate-binding residues include Thr-467, Arg-471, Ala-473, and Gly-474. A Fe(3+)-binding site is contributed by Tyr-538. His-606 contributes to the Fe(3+) binding site.

The protein belongs to the transferrin family. Monomer. Plasma.

It localises to the secreted. Functionally, transferrins are iron binding transport proteins which can bind two Fe(3+) ions in association with the binding of an anion, usually bicarbonate. It is responsible for the transport of iron from sites of absorption and heme degradation to those of storage and utilization. Serum transferrin may also have a further role in stimulating cell proliferation. This is Serotransferrin-A (tf-a) from Xenopus laevis (African clawed frog).